The primary structure comprises 222 residues: 7-cyano-7-deazaguanine synthase (222 aa).

14–24 (FSGGQDSTTCL) contacts ATP. Cys192, Cys201, Cys204, and Cys207 together coordinate Zn(2+).

Belongs to the QueC family. As to quaternary structure, homodimer. It depends on Zn(2+) as a cofactor.

It carries out the reaction 7-carboxy-7-deazaguanine + NH4(+) + ATP = 7-cyano-7-deazaguanine + ADP + phosphate + H2O + H(+). It functions in the pathway purine metabolism; 7-cyano-7-deazaguanine biosynthesis. Its function is as follows. Catalyzes the ATP-dependent conversion of 7-carboxy-7-deazaguanine (CDG) to 7-cyano-7-deazaguanine (preQ(0)). In Clostridium acetobutylicum (strain ATCC 824 / DSM 792 / JCM 1419 / IAM 19013 / LMG 5710 / NBRC 13948 / NRRL B-527 / VKM B-1787 / 2291 / W), this protein is 7-cyano-7-deazaguanine synthase.